An 819-amino-acid chain; its full sequence is DNA replication licensing factor Mcm3 (819 aa).

Positions 290-496 (IFELLSKSLA…DVDQMISDHV (207 aa)) constitute an MCM domain. Positions 348, 388, 389, 390, and 392 each coordinate ADP. An Arginine finger motif is present at residues 472–475 (SRFD). Residue serine 522 is modified to Phosphoserine. A Phosphotyrosine modification is found at tyrosine 538. Residues 655–717 (DRPSKRRRNS…DAGDLTRRET (63 aa)) form a disordered region. A phosphoserine mark is found at serine 664, serine 666, serine 680, and serine 682. 2 positions are modified to phosphothreonine: threonine 690 and threonine 692. Serine 697, serine 735, and serine 739 each carry phosphoserine.

This sequence belongs to the MCM family. As to quaternary structure, component of the Mcm2-7 complex. The complex forms a toroidal hexameric ring with the proposed subunit order Mcm2-Mcm6-Mcm4-Mcm7-Mcm3-Mcm5.

The protein localises to the nucleus. Its subcellular location is the chromosome. The catalysed reaction is ATP + H2O = ADP + phosphate + H(+). Acts as a component of the Mcm2-7 complex (Mcm complex) (Mcm complex) which is the putative replicative helicase essential for 'once per cell cycle' DNA replication initiation and elongation in eukaryotic cells. Core component of CDC45-MCM-GINS (CMG) helicase, the molecular machine that unwinds template DNA during replication, and around which the replisome is built. The active ATPase sites in the Mcm2-7 ring are formed through the interaction surfaces of two neighboring subunits such that a critical structure of a conserved arginine finger motif is provided in trans relative to the ATP-binding site of the Walker A box of the adjacent subunit. The six ATPase active sites, however, are likely to contribute differentially to the complex helicase activity. The chain is DNA replication licensing factor Mcm3 (Mcm3) from Drosophila melanogaster (Fruit fly).